The primary structure comprises 402 residues: MNEFPVVLVINCGSSSIKFSVLDVATCDVLMAGIADGMNTENAFLSINGDKPINLAHSNYEDALKAIAFELEKRDLTDSVALIGHRIAHGGELFTQSVIITDEIIDNIRRVSPLAPLHNYANLSGIDAARHLFPAVRQVAVFDTSFHQTLAPEAYLYGLPWEYFSSLGVRRYGFHGTSHRYVSRRAYELLDLDEKNSGLIVAHLGNGASICAVRNGQSVDTSMGMTPLEGLMMGTRSGDVDFGAMAWIAKETGQTLSDLERVVNKESGLLGISGLSSDLRVLEKAWHEGHERARLAIKTFVHRIARHIAGHAASLHRLDGIIFTGGIGENSVLIRQLAIEHLGVLGLTLDVEMNKQPNSHGERIISANPSQVICAVIPTNEEKMIALDAIHLGNVKAPVEFA.

Residues N11 and K18 each coordinate ATP. N11 is a Mg(2+) binding site. Residue R86 coordinates substrate. D143 serves as the catalytic Proton donor/acceptor. Residues H175, 203-207 (HLGNG), 278-280 (DLR), and 326-330 (GIGEN) contribute to the ATP site.

Belongs to the acetokinase family. TdcD subfamily. In terms of assembly, homodimer. Mg(2+) is required as a cofactor.

The catalysed reaction is propanoate + ATP = propanoyl phosphate + ADP. The protein operates within amino-acid degradation; L-threonine degradation via propanoate pathway; propanoate from L-threonine: step 4/4. Functionally, catalyzes the conversion of propionyl phosphate and ADP to propionate and ATP. The chain is Propionate kinase from Salmonella agona (strain SL483).